A 150-amino-acid polypeptide reads, in one-letter code: L-alanine exporter AlaE (150 aa).

4 helical membrane-spanning segments follow: residues 17–37 (FAMV…VSGM), 48–68 (LSIP…DYVL), 86–106 (LVAY…TVGA), and 111–131 (IITA…LYGY).

It belongs to the AlaE exporter family.

The protein resides in the cell inner membrane. Its function is as follows. Exports L-alanine. This chain is L-alanine exporter AlaE, found in Vibrio cholerae serotype O1 (strain ATCC 39315 / El Tor Inaba N16961).